The sequence spans 294 residues: Protease HtpX (294 aa).

2 consecutive transmembrane segments (helical) span residues 4–24 (IALF…VLSL) and 34–52 (GLLI…VSLM). Position 139 (His-139) interacts with Zn(2+). Glu-140 is a catalytic residue. His-143 is a binding site for Zn(2+). A run of 2 helical transmembrane segments spans residues 158-178 (VVNT…AGFL) and 194-214 (LIYF…ASII). Glu-223 provides a ligand contact to Zn(2+).

Belongs to the peptidase M48B family. It depends on Zn(2+) as a cofactor.

The protein localises to the cell inner membrane. The chain is Protease HtpX from Klebsiella pneumoniae subsp. pneumoniae (strain ATCC 700721 / MGH 78578).